We begin with the raw amino-acid sequence, 373 residues long: MLDRSKMTSAIPDSNSSSSPRGHNQSERDSYNRKKRKGPRLAHRKSRTGCQRCRARRVKCDESRPVCRDCHRHGIPCVYDRPAEEGAIPPSTGIQSRPLEPSPSDPSNDAHMELRLLHHFTLFTSATMPGAHLKRIKDCWSIDVPRLAFSYKPLLHAVFAIAALHLSKVNPDEAGLPDIHCNFLEQALREHRLCIGGITTQTADAVCFTSILLQIDVFATLQSRHVVSYEQVSEWMRLVRGSVAVFDAAMEIVRHNTHPPNIWCIIDTFPMPLRTNSDAGSFSFLLPTVPDDEDDETALEAYRGAVAHINATWLAMEAKEHPQISCRRLMVFPLFVTAGFIDLLEKRRPRALVPCPHHYVTYGGSETLHTNTS.

The tract at residues 1 to 48 (MLDRSKMTSAIPDSNSSSSPRGHNQSERDSYNRKKRKGPRLAHRKSRT) is disordered. Basic residues predominate over residues 33 to 48 (RKKRKGPRLAHRKSRT). Residues 50-77 (CQRCRARRVKCDESRPVCRDCHRHGIPC) constitute a DNA-binding region (zn(2)-C6 fungal-type). Positions 86–110 (GAIPPSTGIQSRPLEPSPSDPSNDA) are disordered.

Its subcellular location is the nucleus. Its function is as follows. Zn(2)-C6 fungal-type transcription factor; part of the gene cluster that mediates the biosynthesis fumihopaside A, a hopane-type glucoside that enhances the thermotolerance and UV resistance of N.fumigata. The sequence is that of Zn(2)-C6 fungal-type transcription factor afumD from Aspergillus fumigatus (strain CBS 144.89 / FGSC A1163 / CEA10) (Neosartorya fumigata).